The following is a 494-amino-acid chain: Integrin beta-like protein 1 (494 aa).

Residues 1–23 (MRPPGFRNFLLLASSLLFAGLSA) form the signal peptide. 40 disulfides stabilise this stretch: Cys-40–Cys-71, Cys-51–Cys-69, Cys-63–Cys-74, Cys-76–Cys-89, Cys-91–Cys-112, Cys-96–Cys-110, Cys-104–Cys-115, Cys-117–Cys-126, Cys-132–Cys-159, Cys-143–Cys-157, Cys-151–Cys-162, Cys-164–Cys-178, Cys-180–Cys-202, Cys-185–Cys-200, Cys-194–Cys-205, Cys-207–Cys-216, Cys-220–Cys-247, Cys-231–Cys-245, Cys-239–Cys-250, Cys-252–Cys-269, Cys-271–Cys-296, Cys-276–Cys-294, Cys-288–Cys-299, Cys-301–Cys-310, Cys-316–Cys-343, Cys-327–Cys-341, Cys-335–Cys-346, Cys-348–Cys-361, Cys-363–Cys-384, Cys-368–Cys-382, Cys-376–Cys-387, Cys-389–Cys-398, Cys-404–Cys-431, Cys-415–Cys-429, Cys-423–Cys-434, Cys-436–Cys-448, Cys-450–Cys-471, Cys-455–Cys-469, Cys-463–Cys-474, and Cys-476–Cys-485. 10 I-EGF domains span residues 40–90 (CRLS…PLCE), 91–127 (CHEW…DACQ), 132–179 (CDLT…KFCE), 180–217 (CDDR…DKCE), 220–270 (CDIT…DTCE), 271–311 (CDER…KKCE), 316–362 (CTLS…KTCE), 363–399 (CDDR…KLCQ), 404–449 (CNMT…EFCD), and 450–486 (CDDR…NACE). An I repeat occupies 51–95 (CRAPGQPPGAALCHGRGRCDCGVCICHVTEPGMFFGPLCECHEWV). Residues 51 to 494 (CRAPGQPPGA…CEIWLGSEYP (444 aa)) form a cysteine-rich tandem repeats region. The stretch at 96 to 142 (CETYDGSTCAGHGKCDCGKCKCDQGWYGDACQYPTNCDLTKKKSNQM) is one II repeat. The stretch at 143–184 (CKNSQDIICSNAGTCHCGRCKCDNSDGSGLVYGKFCECDDRE) is one III repeat. One copy of the IV repeat lies at 185–230 (CIDDETEEICGGHGKCYCGNCYCKAGWHGDKCEFQCDITPWESKRR). A V repeat occupies 231-275 (CTSPDGKICSNRGTCVCGECTCHDVDPTGDWGDIHGDTCECDERD). Residues 276–326 (CRAVYDRYSDDFCSGHGQCNCGRCDCKAGWYGKKCEHPQSCTLSAEESIRK) form a VI repeat. Residues 327-367 (CQGSSDLPCSGRGKCECGKCTCYPPGDRRVYGKTCECDDRR) form a VII repeat. One copy of the VIII repeat lies at 368–414 (CEDLDGVVCGGHGTCSCGRCVCERGWFGKLCQHPRKCNMTEEQSKNL). The N-linked (GlcNAc...) asparagine glycan is linked to Asn-405. The IX repeat unit spans residues 415–454 (CESADGILCSGKGSCHCGKCICSAEEWYISGEFCDCDDRD). The stretch at 455–494 (CDKHDGLICTGNGICSCGNCECWDGWNGNACEIWLGSEYP) is one X repeat.

As to expression, widely expressed in many tissues, but readily detectable only in aorta.

Its subcellular location is the secreted. In Homo sapiens (Human), this protein is Integrin beta-like protein 1 (ITGBL1).